The sequence spans 262 residues: Translation initiation factor 2 subunit alpha (262 aa).

The region spanning 15 to 86 (GELVVGTVHK…RKGHVDVSMK (72 aa)) is the S1 motif domain.

This sequence belongs to the eIF-2-alpha family. As to quaternary structure, heterotrimer composed of an alpha, a beta and a gamma chain.

Its function is as follows. eIF-2 functions in the early steps of protein synthesis by forming a ternary complex with GTP and initiator tRNA. In Methanothermobacter thermautotrophicus (strain ATCC 29096 / DSM 1053 / JCM 10044 / NBRC 100330 / Delta H) (Methanobacterium thermoautotrophicum), this protein is Translation initiation factor 2 subunit alpha (eif2a).